Reading from the N-terminus, the 740-residue chain is F-BAR and double SH3 domains protein 2 (740 aa).

The 275-residue stretch at 8-282 (VKVTQELKNI…NSSKVVRDYN (275 aa)) folds into the F-BAR domain. Positions 303–323 (PCDSDTSRQLESETGTTEEHS) are disordered. Basic and acidic residues predominate over residues 307 to 323 (DTSRQLESETGTTEEHS). Residues 356-397 (GAAVSEQSRAELEQKIDEARENIRKAEIIKLKAEARLDLLKQ) are a coiled coil. SH3 domains are found at residues 469–530 (NYPL…FPTS) and 567–629 (ASVC…ELSA). Positions 567 to 629 (ASVCFVKALY…PSVLVEELSA (63 aa)) are required and sufficient for location at clathrin-coated pits. A disordered region spans residues 633-740 (GDTPWMREIQ…KIEDVEITLV (108 aa)). Residues 646–657 (SPKPHASLPPLP) show a composition bias toward pro residues. 2 positions are modified to phosphoserine: S675 and S681.

Homodimer. Interacts (via SH3 domain 2) with ITSN1 (via SH3 domain 4). Recruited to clathrin-coated pits during a mid-to-late stage of assembly via interaction with ITSN1. Interacts (via SH3 domain 1) with WASL. Interacts with WAS. Interacts with CASK and MAGI1. CASK inhibits interaction with MAGI1. Phosphorylated. Phosphorylation on a Ser residue is important for recruitment to the cell membrane and for its role in promoting endocytosis. In terms of tissue distribution, liver, brain, heart, placenta, skeletal muscle, pancreas, lung and kidney.

It localises to the cytoplasm. Its subcellular location is the cell junction. The protein resides in the membrane. The protein localises to the clathrin-coated pit. It is found in the cell membrane. It localises to the cell projection. Its subcellular location is the stereocilium. Its function is as follows. Adapter protein that plays a role in endocytosis via clathrin-coated pits. Contributes to the internalization of cell surface receptors, such as integrin ITGB1 and transferrin receptor. Promotes endocytosis of EGFR in cancer cells, and thereby contributes to the down-regulation of EGFR signaling. Recruited to clathrin-coated pits during a mid-to-late stage of assembly, where it is required for normal progress from U-shaped intermediate stage pits to terminal, omega-shaped pits. Binds to membranes enriched in phosphatidylinositol 3,4-bisphosphate or phosphatidylinositol 3,4,5-trisphosphate. When bound to membranes, promotes actin polymerization via its interaction with WAS and/or WASL which leads to the activation of the Arp2/3 complex. Does not promote actin polymerisation in the absence of membranes. This Homo sapiens (Human) protein is F-BAR and double SH3 domains protein 2 (FCHSD2).